The sequence spans 307 residues: Transmembrane and coiled-coil domain-containing protein 5B (307 aa).

A coiled-coil region spans residues 17-207 (FASSLEAVKQ…LEKQISKAQD (191 aa)). Residues 243–265 (YFQYLTFMVLVFIRLLAYVIFHL) traverse the membrane as a helical segment.

This sequence belongs to the TMCO5 family.

The protein resides in the membrane. The chain is Transmembrane and coiled-coil domain-containing protein 5B (TMCO5B) from Homo sapiens (Human).